The primary structure comprises 428 residues: Spliceosome RNA helicase Ddx39b (428 aa).

Positions 1–19 (MAENDVDNELLDYEDDEVE) are enriched in acidic residues. Residues 1–31 (MAENDVDNELLDYEDDEVETAAGADGTEAPA) form a disordered region. Alanine 2 carries the N-acetylalanine modification. An N6-acetyllysine; alternate modification is found at lysine 36. Residue lysine 36 forms a Glycyl lysine isopeptide (Lys-Gly) (interchain with G-Cter in SUMO2); alternate linkage. Phosphoserine occurs at positions 38 and 41. The short motif at 45 to 73 (SGFRDFLLKPELLRAIVDCGFEHPSEVQH) is the Q motif element. The 174-residue stretch at 76-249 (IPQAILGMDV…RKFMQDPMEI (174 aa)) folds into the Helicase ATP-binding domain. 89-96 (AKSGMGKT) provides a ligand contact to ATP. Threonine 172 bears the Phosphothreonine mark. Residues 196–199 (DECD) carry the DECD box motif. The Helicase C-terminal domain maps to 261–422 (GLQQYYVKLK…ELPDEIDISS (162 aa)).

It belongs to the DEAD box helicase family. DECD subfamily. Homodimer, and heterodimer with DDX39A. DDX39B interacts with the THO subcomplex to form the THO-DDX39B complex which multimerizes into a 28-subunit tetrameric assembly. Component of the transcription/export (TREX) complex at least composed of ALYREF/THOC4, DDX39B, SARNP/CIP29, CHTOP and the THO subcomplex; in the complex interacts with THOC2. THOC1-THOC2-THOC3-DDX39B subcomplex is sufficient for the interaction with export factor NXF1-NXT1. TREX seems to have a dynamic structure involving ATP-dependent remodeling. Within the TREX complex bridges ALYREF/THOC4 and the THO subcomplex, and, in a ATP-dependent manner, ALYREF/THOC4 and SARNP/CIP29. Component of the spliceosome. Interacts directly with U2AF2. Interacts with RBM8A, RNPS1 and SRRM1, FYTTD1/UIF, THOC1, MX1 and POLDIP3. Interacts with LUZP4. Interacts with SARNP/CIP29 (via the C-terminal domain); the interaction is direct and facilitates RNA binding of DDX39B.

Its subcellular location is the nucleus. It localises to the nucleus speckle. It is found in the cytoplasm. It catalyses the reaction ATP + H2O = ADP + phosphate + H(+). Involved in nuclear export of spliced and unspliced mRNA. Component of the TREX complex which is thought to couple mRNA transcription, processing and nuclear export, and specifically associates with spliced mRNA and not with unspliced pre-mRNA. The TREX complex is recruited to spliced mRNAs by a transcription-independent mechanism, binds to mRNA upstream of the exon-junction complex (EJC) and is recruited in a splicing- and cap-dependent manner to a region near the 5' end of the mRNA where it functions in mRNA export to the cytoplasm via the TAP/NXF1 pathway. The THOC1-THOC2-THOC3 core complex alone is sufficient to promote ATPase activity of DDX39B; in the complex THOC2 is the only component that directly interacts with DDX39B. Associates with SARNP/CIP29, which facilitates RNA binding of DDX39B and likely plays a role in mRNA export. May undergo several rounds of ATP hydrolysis during assembly of TREX to drive subsequent loading of components such as ALYREF/THOC4 and CHTOP onto mRNA. Also associates with pre-mRNA independent of ALYREF/THOC4. Involved in the nuclear export of intronless mRNA; the ATP-bound form is proposed to recruit export adapter ALYREF/THOC4 to intronless mRNA; its ATPase activity is cooperatively stimulated by RNA and ALYREF/THOC4 and ATP hydrolysis is thought to trigger the dissociation from RNA to allow the association of ALYREF/THOC4 and the NXF1-NXT1 heterodimer. Involved in transcription elongation and genome stability. In terms of biological role, splice factor that is required for the first ATP-dependent step in spliceosome assembly and for the interaction of U2 snRNP with the branchpoint. Has both RNA-stimulated ATP binding/hydrolysis activity and ATP-dependent RNA unwinding activity. Even with the stimulation of RNA, the ATPase activity is weak. Can only hydrolyze ATP but not other NTPs. The RNA stimulation of ATPase activity does not have a strong preference for the sequence and length of the RNA. However, ssRNA stimulates the ATPase activity much more strongly than dsRNA. Can unwind 5' or 3' overhangs or blunt end RNA duplexes in vitro. The ATPase and helicase activities are not influenced by U2AF2; the effect of ALYREF/THOC4 is reported conflictingly. This Mus musculus (Mouse) protein is Spliceosome RNA helicase Ddx39b (Ddx39b).